Reading from the N-terminus, the 211-residue chain is Beta-crystallin B3 (211 aa).

An N-acetylmethionine modification is found at Met-1. Ala-2 bears the N-acetylalanine; in Beta-crystallin B3, N-terminally processed mark. The interval 2–23 is N-terminal arm; it reads AEQHGAPEQAAAGKSHGGLGGS. Beta/gamma crystallin 'Greek key' domains follow at residues 24–63 and 64–108; these read YKVTVYELENFQGKRCELSAECPNLTDSLLEKVGSIQVES and GPWL…RPLH. Residues 109–113 are connecting peptide; that stretch reads IDGPD. 2 Beta/gamma crystallin 'Greek key' domains span residues 114–155 and 156–198; these read HKLH…RVIN and GTWV…RRIR. The C-terminal arm stretch occupies residues 200-211; it reads QKWHKRGCFLSS.

The protein belongs to the beta/gamma-crystallin family. As to quaternary structure, homo/heterodimer, or complexes of higher-order. The structure of beta-crystallin oligomers seems to be stabilized through interactions between the N-terminal arms.

Crystallins are the dominant structural components of the vertebrate eye lens. In Mus musculus (Mouse), this protein is Beta-crystallin B3 (Crybb3).